The chain runs to 551 residues: Tetrachloroethene reductive dehalogenase (551 aa).

The tat-type signal signal peptide spans 1–39; sequence MGEINRRNFLKASMLGAAAAAVASASAVKGMVSPLVADA. One can recognise a 4Fe-4S ferredoxin-type 1 domain in the interval 411 to 440; the sequence is PRKFGVREFCRLCKKCADACPAQAISHEKD. [4Fe-4S] cluster-binding residues include C420, C423, C426, C430, C467, C478, C481, and C485. One can recognise a 4Fe-4S ferredoxin-type 2 domain in the interval 478 to 496; that stretch reads CANCVAVCSWNKVETWNHD.

The protein belongs to the PceA family. In terms of assembly, monomer. Requires [4Fe-4S] cluster as cofactor. Corrinoid serves as cofactor. Predicted to be exported by the Tat system. The position of the signal peptide cleavage has been experimentally proven.

It is found in the cell membrane. It catalyses the reaction trichloroethene + chloride + A + H(+) = tetrachloroethene + AH2. It carries out the reaction trichloroethene + AH2 = (Z)-1,2-dichloroethene + chloride + A + H(+). Its activity is regulated as follows. Activity is inhibited by ammonium ions. Photoreversibly inactivated by 1-iodopropane. In terms of biological role, catalyzes the reductive dechlorination of tetrachloroethene (PCE) to trichloroethene (TCE) and of trichloroethene to cis-1,2-dichloroethene (DCE). Can also use trichlorofluoroethene, tetrachloromethane, hexachloroethane, tetrachloroethane, trichloroethane and 1,1,1-trichloro-2,2,2-trifluoroethane. Menaquinone can act as the electron donor. Reduced methyl viologen can act as the artificial electron donor. The polypeptide is Tetrachloroethene reductive dehalogenase (Dehalobacter restrictus (strain DSM 9455 / PER-K23)).